The sequence spans 301 residues: Probable alpha-L-glutamate ligase 1 (301 aa).

The ATP-grasp domain occupies 104 to 287 (LQLLSRKGIG…VTEPIVEYIE (184 aa)). ATP-binding positions include K141, 178-179 (EY), D187, and 211-213 (RSN). D248, E260, and N262 together coordinate Mg(2+). The Mn(2+) site is built by D248, E260, and N262.

Belongs to the RimK family. Requires Mg(2+) as cofactor. The cofactor is Mn(2+).

The polypeptide is Probable alpha-L-glutamate ligase 1 (Shewanella sp. (strain MR-4)).